The chain runs to 933 residues: Serine/threonine-protein kinase PknD (933 aa).

Residues 4–291 form the Protein kinase domain; sequence YDIIRMIGKG…ALKADIEQHL (288 aa). Residues 10-18 and lysine 33 contribute to the ATP site; that span reads IGKGGMGEV. The active-site Proton acceptor is the aspartate 138.

It belongs to the protein kinase superfamily. Ser/Thr protein kinase family. In terms of processing, autophosphorylated on serine and threonine residues.

The catalysed reaction is L-seryl-[protein] + ATP = O-phospho-L-seryl-[protein] + ADP + H(+). The enzyme catalyses L-threonyl-[protein] + ATP = O-phospho-L-threonyl-[protein] + ADP + H(+). Together with the serine/threonine kinase Pkn1, may play a role in the specific interactions with host proteins during intracellular growth. The polypeptide is Serine/threonine-protein kinase PknD (Chlamydia abortus (strain DSM 27085 / S26/3) (Chlamydophila abortus)).